The primary structure comprises 95 residues: UPF0213 protein ESA_03545 (95 aa).

The region spanning 2–77 (EEWFLYLIRC…KQLTKRQKEQ (76 aa)) is the GIY-YIG domain.

It belongs to the UPF0213 family.

This Cronobacter sakazakii (strain ATCC BAA-894) (Enterobacter sakazakii) protein is UPF0213 protein ESA_03545.